A 465-amino-acid chain; its full sequence is Glutamate--tRNA ligase (465 aa).

A 'HIGH' region motif is present at residues 11 to 21; sequence PSPTGFIHLGN. The 'KMSKS' region motif lies at 243 to 247; it reads KMSKR. Lysine 246 is a binding site for ATP.

The protein belongs to the class-I aminoacyl-tRNA synthetase family. Glutamate--tRNA ligase type 1 subfamily. As to quaternary structure, monomer.

The protein localises to the cytoplasm. It carries out the reaction tRNA(Glu) + L-glutamate + ATP = L-glutamyl-tRNA(Glu) + AMP + diphosphate. In terms of biological role, catalyzes the attachment of glutamate to tRNA(Glu) in a two-step reaction: glutamate is first activated by ATP to form Glu-AMP and then transferred to the acceptor end of tRNA(Glu). This is Glutamate--tRNA ligase from Cupriavidus metallidurans (strain ATCC 43123 / DSM 2839 / NBRC 102507 / CH34) (Ralstonia metallidurans).